A 449-amino-acid polypeptide reads, in one-letter code: UDP-N-acetylglucosamine 1-carboxyvinyltransferase (449 aa).

Phosphoenolpyruvate is bound at residue 51-52 (KN). Arg-121 provides a ligand contact to UDP-N-acetyl-alpha-D-glucosamine. Cys-145 (proton donor) is an active-site residue. The residue at position 145 (Cys-145) is a 2-(S-cysteinyl)pyruvic acid O-phosphothioketal. Residues 150 to 154 (RPVDQ), Asp-333, and Ile-355 each bind UDP-N-acetyl-alpha-D-glucosamine.

It belongs to the EPSP synthase family. MurA subfamily.

The protein localises to the cytoplasm. The catalysed reaction is phosphoenolpyruvate + UDP-N-acetyl-alpha-D-glucosamine = UDP-N-acetyl-3-O-(1-carboxyvinyl)-alpha-D-glucosamine + phosphate. It participates in cell wall biogenesis; peptidoglycan biosynthesis. Its function is as follows. Cell wall formation. Adds enolpyruvyl to UDP-N-acetylglucosamine. This chain is UDP-N-acetylglucosamine 1-carboxyvinyltransferase, found in Burkholderia lata (strain ATCC 17760 / DSM 23089 / LMG 22485 / NCIMB 9086 / R18194 / 383).